Here is a 607-residue protein sequence, read N- to C-terminus: All-trans-retinol 13,14-reductase (607 aa).

An N-terminal signal peptide occupies residues 1–22; sequence MWFAVVAIFLALVAFLYRYVVG.

Belongs to the carotenoid/retinoid oxidoreductase family. CrtISO subfamily. NAD(+) is required as a cofactor. The cofactor is NADP(+). FAD serves as cofactor.

It localises to the endoplasmic reticulum membrane. It carries out the reaction all-trans-13,14-dihydroretinol + A = all-trans-retinol + AH2. In terms of biological role, catalyzes the saturation of all-trans-retinol to all-trans-13,14-dihydroretinol. In addition, saturates the 7-8 double bond of all-trans-retinol to produce all-trans-7,8-dihydroretinol. Can also use vitamin A2 (all-trans-3,4-didehydroretinol) as a substrate, to produce all-trans-13,14-dihydro-3,4-didehydroretinol or all-trans-7,8-dihydro-3,4-didehydroretinol. May play a role in vitamin A metabolism. This Danio rerio (Zebrafish) protein is All-trans-retinol 13,14-reductase.